Here is a 260-residue protein sequence, read N- to C-terminus: Adenosylcobinamide-GDP ribazoletransferase (260 aa).

The next 6 helical transmembrane spans lie at 40 to 60, 64 to 84, 117 to 137, 192 to 212, 214 to 234, and 240 to 260; these read AFPL…FMAY, LPPL…TGAL, FAAL…MTII, GIGL…LSLI, ALVL…AKIG, and TLGA…VMAL.

It belongs to the CobS family. The cofactor is Mg(2+).

It localises to the cell inner membrane. It carries out the reaction alpha-ribazole + adenosylcob(III)inamide-GDP = adenosylcob(III)alamin + GMP + H(+). The enzyme catalyses alpha-ribazole 5'-phosphate + adenosylcob(III)inamide-GDP = adenosylcob(III)alamin 5'-phosphate + GMP + H(+). Its pathway is cofactor biosynthesis; adenosylcobalamin biosynthesis; adenosylcobalamin from cob(II)yrinate a,c-diamide: step 7/7. In terms of biological role, joins adenosylcobinamide-GDP and alpha-ribazole to generate adenosylcobalamin (Ado-cobalamin). Also synthesizes adenosylcobalamin 5'-phosphate from adenosylcobinamide-GDP and alpha-ribazole 5'-phosphate. The polypeptide is Adenosylcobinamide-GDP ribazoletransferase (Brucella anthropi (strain ATCC 49188 / DSM 6882 / CCUG 24695 / JCM 21032 / LMG 3331 / NBRC 15819 / NCTC 12168 / Alc 37) (Ochrobactrum anthropi)).